We begin with the raw amino-acid sequence, 143 residues long: Large ribosomal subunit protein uL11 (143 aa).

The protein belongs to the universal ribosomal protein uL11 family. As to quaternary structure, part of the ribosomal stalk of the 50S ribosomal subunit. Interacts with L10 and the large rRNA to form the base of the stalk. L10 forms an elongated spine to which L12 dimers bind in a sequential fashion forming a multimeric L10(L12)X complex. One or more lysine residues are methylated.

In terms of biological role, forms part of the ribosomal stalk which helps the ribosome interact with GTP-bound translation factors. The chain is Large ribosomal subunit protein uL11 from Marinobacter nauticus (strain ATCC 700491 / DSM 11845 / VT8) (Marinobacter aquaeolei).